A 456-amino-acid polypeptide reads, in one-letter code: Adenylosuccinate synthetase isozyme 2 (456 aa).

The span at 1–14 (MSISESSPAATSLP) shows a compositional bias: polar residues. The disordered stretch occupies residues 1 to 24 (MSISESSPAATSLPNGDCGRPRAR). Residues 39–45 (GDEGKGK) and 67–69 (GHT) each bind GTP. Residue aspartate 40 is the Proton acceptor of the active site. Residues aspartate 40 and glycine 67 each coordinate Mg(2+). Residue aspartate 40 participates in substrate binding. Residues 40-43 (DEGK), 65-68 (NAGH), threonine 162, arginine 176, asparagine 255, threonine 270, and arginine 334 contribute to the IMP site. Histidine 68 serves as the catalytic Proton donor. Residue 330–336 (VTTGRKR) coordinates substrate. GTP-binding positions include arginine 336, 362-364 (KLD), and 444-447 (GVGK).

Belongs to the adenylosuccinate synthetase family. In terms of assembly, homodimer. The cofactor is Mg(2+).

The protein localises to the cytoplasm. Its subcellular location is the mitochondrion. The enzyme catalyses IMP + L-aspartate + GTP = N(6)-(1,2-dicarboxyethyl)-AMP + GDP + phosphate + 2 H(+). Its pathway is purine metabolism; AMP biosynthesis via de novo pathway; AMP from IMP: step 1/2. Its activity is regulated as follows. Inhibited competitively by AMP and IMP and non-competitively by fructose 1,6-bisphosphate. Functionally, plays an important role in the de novo pathway and in the salvage pathway of purine nucleotide biosynthesis. Catalyzes the first committed step in the biosynthesis of AMP from IMP. The protein is Adenylosuccinate synthetase isozyme 2 (Adss2) of Mus musculus (Mouse).